We begin with the raw amino-acid sequence, 430 residues long: Adenylosuccinate synthetase (430 aa).

GTP-binding positions include G11 to K17 and G39 to S41. D12 acts as the Proton acceptor in catalysis. Residues D12 and G39 each contribute to the Mg(2+) site. IMP is bound by residues D12–K15, N37–H40, T129, R143, N221, T236, and R300. The Proton donor role is filled by H40. Residue V296–R302 coordinates substrate. GTP is bound by residues R302, K328 to D330, and G412 to G414.

Belongs to the adenylosuccinate synthetase family. As to quaternary structure, homodimer. Requires Mg(2+) as cofactor.

It is found in the cytoplasm. The enzyme catalyses IMP + L-aspartate + GTP = N(6)-(1,2-dicarboxyethyl)-AMP + GDP + phosphate + 2 H(+). It participates in purine metabolism; AMP biosynthesis via de novo pathway; AMP from IMP: step 1/2. Its function is as follows. Plays an important role in the de novo pathway and in the salvage pathway of purine nucleotide biosynthesis. Catalyzes the first committed step in the biosynthesis of AMP from IMP. In Neurospora crassa (strain ATCC 24698 / 74-OR23-1A / CBS 708.71 / DSM 1257 / FGSC 987), this protein is Adenylosuccinate synthetase.